Reading from the N-terminus, the 453-residue chain is 4,4'-diapolycopene-4,4'-dial dehydrogenase (453 aa).

Residues 1 to 20 are compositionally biased toward basic and acidic residues; sequence MPDNDSHSLKSLPERQREDL. The interval 1–23 is disordered; sequence MPDNDSHSLKSLPERQREDLFSA. Residues Glu215 and Cys249 contribute to the active site.

This sequence belongs to the aldehyde dehydrogenase family.

The enzyme catalyses all-trans-4,4'-diapolycopene-4,4'-dial + 2 A + 2 H2O = all-trans-4,4'-diapolycopene-4,4'-dioate + 2 AH2 + 2 H(+). It participates in carotenoid biosynthesis. Involved in the biosynthesis of the major C30 carotenoid 4,4'-diapolycopene-4,4'-dioic acid, which protects B.firmus from peroxidative reactions. Catalyzes the oxidation of 4,4'-diapolycopene-4,4'-dial to yield 4,4'-diapolycopene-4,4'-dioic aci. The polypeptide is 4,4'-diapolycopene-4,4'-dial dehydrogenase (Cytobacillus firmus (Bacillus firmus)).